Here is a 200-residue protein sequence, read N- to C-terminus: Sorting nexin-10 (200 aa).

The segment at 8 to 125 (EEFVSVWVRD…SLHLFLQSHL (118 aa)) is required for interaction with ATP6V1D. The PX domain maps to 10–127 (FVSVWVRDPR…HLFLQSHLNS (118 aa)). The a 1,2-diacyl-sn-glycero-3-phospho-(1D-myo-inositol-3-phosphate) site is built by R53, K79, and R94. The segment covering 156–167 (FPEEEEGKKEND) has biased composition (basic and acidic residues). A disordered region spans residues 156-200 (FPEEEEGKKENDIDYDSESSSSGFGHSSDDSSSHGCKMSTAPQES).

Belongs to the sorting nexin family. In terms of assembly, interacts with ATP6V1D; may play a role in ciliogenesis.

Its subcellular location is the cytoplasm. It localises to the endosome membrane. The protein resides in the cytoskeleton. The protein localises to the microtubule organizing center. It is found in the centrosome. Its function is as follows. Probable phosphoinositide-binding protein involved in protein sorting and membrane trafficking in endosomes. Plays a role in cilium biogenesis through regulation of the transport and the localization of proteins to the cilium. Required for the localization to the cilium of V-ATPase subunit ATP6V1D and ATP6V0D1, and RAB8A. Involved in osteoclast differentiation and therefore bone resorption. The chain is Sorting nexin-10 (SNX10) from Bos taurus (Bovine).